The primary structure comprises 2778 residues: Probable ubiquitin carboxyl-terminal hydrolase FAF (2778 aa).

A disordered region spans residues 1-85 (MTFDTRRHTT…SQSSDDVAAS (85 aa)). Over residues 10-39 (TGQPGSTAPSSSSSTTSTTTTTTSPAQSAG) the composition is skewed to low complexity. Over residues 71–85 (QPATDSQSSDDVAAS) the composition is skewed to polar residues. Position 924 is a phosphoserine (Ser924). The interval 1065 to 1094 (GTGLASSPDSSSDSSTGSPPRPCPDMQRVE) is disordered. Over residues 1070 to 1082 (SSPDSSSDSSTGS) the composition is skewed to low complexity. Residues 1668–2062 (CGLKNAGATC…NAYMLFYTRC (395 aa)) enclose the USP domain. Residue Cys1677 is the Nucleophile of the active site. His1986 serves as the catalytic Proton acceptor. Disordered regions lie at residues 2568 to 2632 (VSEK…GDSN) and 2644 to 2691 (AYTS…INGL). Low complexity-rich tracts occupy residues 2614–2627 (TPTTSSPSTAAWPA) and 2644–2671 (AYTSTGSGSTSGGSAPTSALTTTAGSGA). The segment covering 2672–2691 (NSETESSAQETTGETTINGL) has biased composition (polar residues).

The protein belongs to the peptidase C19 family. As to quaternary structure, interacts with imd. Post-translationally, ubiquitinated. Ubiquitination is enhanced by the expression of imd. As to expression, eye disks and ovaries. Expressed in larval fat body.

It catalyses the reaction Thiol-dependent hydrolysis of ester, thioester, amide, peptide and isopeptide bonds formed by the C-terminal Gly of ubiquitin (a 76-residue protein attached to proteins as an intracellular targeting signal).. Ubiquitin C-terminal hydrolase involved in development and the imd/NF-kappa-B (IMD) signaling cascade. Required for eye and embryo development, and plays a role in compound eye assembly and oogenesis respectively. In the larval eye disks, cells outside the assembling facets require this protein for short-range cell interactions that prevent the mystery cells from becoming photoreceptors. Also required for nuclear migration and cellularization in early embryogenesis and could play a role in pole cell determination, development or function. Regulates the IMD signaling cascade at later stages of infection (around 6 hours post-infection) by inhibiting the expression of the antimicrobial peptides Dpt and Dro. Acts by modulating the state of imd polyubiquitination and/or stability; a function which appears to be independent of its enzymatic activity. In turn, imd enhances the polyubiquitination and stability of faf suggesting that they may form a regulatory feedback mechanism within the Imd pathway. The chain is Probable ubiquitin carboxyl-terminal hydrolase FAF (faf) from Drosophila melanogaster (Fruit fly).